The following is a 166-amino-acid chain: Ribosome maturation factor RimP (166 aa).

Belongs to the RimP family.

The protein resides in the cytoplasm. Functionally, required for maturation of 30S ribosomal subunits. This chain is Ribosome maturation factor RimP, found in Psychrobacter sp. (strain PRwf-1).